A 940-amino-acid chain; its full sequence is Isoleucine--tRNA ligase (940 aa).

The 'HIGH' region motif lies at 58 to 68; that stretch reads PYANGDIHIGH. L-isoleucyl-5'-AMP is bound at residue Glu564. Residues 605–609 carry the 'KMSKS' region motif; that stretch reads KMSKS. Lys608 lines the ATP pocket. The Zn(2+) site is built by Cys903, Cys906, Cys923, and Cys926.

The protein belongs to the class-I aminoacyl-tRNA synthetase family. IleS type 1 subfamily. In terms of assembly, monomer. The cofactor is Zn(2+).

It localises to the cytoplasm. The enzyme catalyses tRNA(Ile) + L-isoleucine + ATP = L-isoleucyl-tRNA(Ile) + AMP + diphosphate. Functionally, catalyzes the attachment of isoleucine to tRNA(Ile). As IleRS can inadvertently accommodate and process structurally similar amino acids such as valine, to avoid such errors it has two additional distinct tRNA(Ile)-dependent editing activities. One activity is designated as 'pretransfer' editing and involves the hydrolysis of activated Val-AMP. The other activity is designated 'posttransfer' editing and involves deacylation of mischarged Val-tRNA(Ile). The sequence is that of Isoleucine--tRNA ligase from Shewanella halifaxensis (strain HAW-EB4).